The sequence spans 807 residues: Glycerol-3-phosphate acyltransferase (807 aa).

Residues 308–313 (CHRSHM) carry the HXXXXD motif motif.

This sequence belongs to the GPAT/DAPAT family.

It is found in the cell inner membrane. The enzyme catalyses sn-glycerol 3-phosphate + an acyl-CoA = a 1-acyl-sn-glycero-3-phosphate + CoA. It participates in phospholipid metabolism; CDP-diacylglycerol biosynthesis; CDP-diacylglycerol from sn-glycerol 3-phosphate: step 1/3. In Shewanella woodyi (strain ATCC 51908 / MS32), this protein is Glycerol-3-phosphate acyltransferase.